A 195-amino-acid polypeptide reads, in one-letter code: Ferredoxin-2, mitochondrial (195 aa).

A mitochondrion-targeting transit peptide spans Met-1–Cys-61. The region spanning Asn-81–Thr-182 is the 2Fe-2S ferredoxin-type domain. Residues Cys-117, Cys-123, Cys-126, and Cys-163 each coordinate [2Fe-2S] cluster.

This sequence belongs to the adrenodoxin/putidaredoxin family. Component of the mitochondrial core iron-sulfur cluster (ISC) complex composed of NFS1, LYRM4, NDUFAB1, ISCU, FXN, and FDX2; this complex is a heterohexamer containing two copies of each monomer. Form a heterodimer complex with NFS1. [2Fe-2S] cluster is required as a cofactor.

The protein resides in the mitochondrion. It is found in the mitochondrion matrix. Its function is as follows. Electron donor, of the core iron-sulfur cluster (ISC) assembly complex, that acts to reduce the persulfide into sulfide during [2Fe-2S] clusters assembly on the scaffolding protein ISCU. The core iron-sulfur cluster (ISC) assembly complex is involved in the de novo synthesis of a [2Fe-2S] cluster, the first step of the mitochondrial iron-sulfur protein biogenesis. This process is initiated by the cysteine desulfurase complex (NFS1:LYRM4:NDUFAB1) that produces persulfide which is delivered on the scaffold protein ISCU in a FXN-dependent manner. Then this complex is stabilized by FDX2 which provides reducing equivalents to accomplish the [2Fe-2S] cluster assembly. Finally, the [2Fe-2S] cluster is transferred from ISCU to chaperone proteins, including HSCB, HSPA9 and GLRX5. Essential for coenzyme Q biosynthesis: together with FDXR, transfers the electrons required for the hydroxylation reaction performed by COQ6. The protein is Ferredoxin-2, mitochondrial of Danio rerio (Zebrafish).